The sequence spans 760 residues: Catalase-peroxidase (760 aa).

The tract at residues 1-57 (MTDSQDNRTPESPQGVDRKAEGGCPVLHDGVTAQGSESENPAIDSPTPRTGGRPNSL) is disordered. The tryptophyl-tyrosyl-methioninium (Trp-Tyr) (with M-277) cross-link spans 129–251 (WHAAGTYRIH…LGAVQMGLIY (123 aa)). Residue His-130 is the Proton acceptor of the active site. A cross-link (tryptophyl-tyrosyl-methioninium (Tyr-Met) (with W-129)) is located at residues 251–277 (YVNPEGPNGNPDPLASARDIRETFARM). A heme b-binding site is contributed by His-292.

It belongs to the peroxidase family. Peroxidase/catalase subfamily. As to quaternary structure, homodimer or homotetramer. Heme b is required as a cofactor. Formation of the three residue Trp-Tyr-Met cross-link is important for the catalase, but not the peroxidase activity of the enzyme.

The enzyme catalyses H2O2 + AH2 = A + 2 H2O. The catalysed reaction is 2 H2O2 = O2 + 2 H2O. In terms of biological role, bifunctional enzyme with both catalase and broad-spectrum peroxidase activity. This Nocardioides sp. (strain ATCC BAA-499 / JS614) protein is Catalase-peroxidase.